A 1715-amino-acid chain; its full sequence is Protein PHYLLO, chloroplastic (1715 aa).

The transit peptide at Met1 to Arg19 directs the protein to the chloroplast. The interval Tyr20–His273 is inactive isochorismate synthase. The interval Asn363 to Leu933 is 2-succinyl-5-enolpyruvyl-6-hydroxy-3-cyclohexene-1-carboxylate synthase. The helical transmembrane segment at Ala429 to Ala449 threads the bilayer. The tract at residues Phe981 to Gly1364 is O-succinylbenzoate synthase. Lys1170 serves as the catalytic Proton donor; for the o-succinylbenzoate synthase activity. The Mg(2+) site is built by Asp1202, Glu1228, and Asp1251. The active-site Proton acceptor; for the o-succinylbenzoate synthase activity is the Lys1279. Residues His1418–Met1715 are 2-succinyl-6-hydroxy-2,4-cyclohexadiene-1-carboxylate synthase. An AB hydrolase-1 domain is found at Leu1435 to Pro1540.

It in the N-terminal section; belongs to the isochorismate synthase family. In the 2nd section; belongs to the TPP enzyme family. MenD subfamily. The protein in the 3rd section; belongs to the mandelate racemase/muconate lactonizing enzyme family. MenC type 1 subfamily. This sequence in the C-terminal section; belongs to the AB hydrolase superfamily. MenH family. It depends on Mg(2+) as a cofactor. The cofactor is Mn(2+). Thiamine diphosphate serves as cofactor.

The protein localises to the plastid. It localises to the chloroplast membrane. It catalyses the reaction isochorismate + 2-oxoglutarate + H(+) = 5-enolpyruvoyl-6-hydroxy-2-succinyl-cyclohex-3-ene-1-carboxylate + CO2. The enzyme catalyses (1R,6R)-6-hydroxy-2-succinyl-cyclohexa-2,4-diene-1-carboxylate = 2-succinylbenzoate + H2O. It carries out the reaction 5-enolpyruvoyl-6-hydroxy-2-succinyl-cyclohex-3-ene-1-carboxylate = (1R,6R)-6-hydroxy-2-succinyl-cyclohexa-2,4-diene-1-carboxylate + pyruvate. Its function is as follows. Multifunctional enzyme required for phylloquinone (vitamin K1) biosynthesis. This chain is Protein PHYLLO, chloroplastic (PHYLLO), found in Arabidopsis thaliana (Mouse-ear cress).